The following is a 425-amino-acid chain: ATP-dependent RNA helicase RhlB (425 aa).

Positions 9–37 (TRFADLALHPKIQQAISSAGFEYCTPIQA) match the Q motif motif. One can recognise a Helicase ATP-binding domain in the interval 40–218 (LPVALSNRDV…YEHMNAPTKL (179 aa)). ATP is bound at residue 53-60 (AQTGTGKT). Residues 164 to 167 (DEAD) carry the DEAD box motif. A Helicase C-terminal domain is found at 242–389 (KFPLLLTLIE…VTKYDGDALL (148 aa)). A disordered region spans residues 391 to 425 (DLRRPRPIQRRRRHNSGGGKGKPRGRRSGPPRNAS). Residues 395–419 (PRPIQRRRRHNSGGGKGKPRGRRSG) show a composition bias toward basic residues.

This sequence belongs to the DEAD box helicase family. RhlB subfamily. As to quaternary structure, component of the RNA degradosome, which is a multiprotein complex involved in RNA processing and mRNA degradation.

It localises to the cytoplasm. The catalysed reaction is ATP + H2O = ADP + phosphate + H(+). Functionally, DEAD-box RNA helicase involved in RNA degradation. Has RNA-dependent ATPase activity and unwinds double-stranded RNA. The sequence is that of ATP-dependent RNA helicase RhlB from Idiomarina loihiensis (strain ATCC BAA-735 / DSM 15497 / L2-TR).